The following is a 256-amino-acid chain: Post-translational flagellin modification protein A (256 aa).

Serine 145 contributes to the substrate binding site. Tyrosine 168 (proton acceptor) is an active-site residue.

Belongs to the short-chain dehydrogenases/reductases (SDR) family.

In terms of biological role, required for biosynthesis of LAH modification in the post-translational modification of Campylobacter coli flagellin. In Campylobacter coli, this protein is Post-translational flagellin modification protein A (ptmA).